A 395-amino-acid chain; its full sequence is ATP phosphoribosyltransferase regulatory subunit (395 aa).

It belongs to the class-II aminoacyl-tRNA synthetase family. HisZ subfamily. Heteromultimer composed of HisG and HisZ subunits.

The protein resides in the cytoplasm. Its pathway is amino-acid biosynthesis; L-histidine biosynthesis; L-histidine from 5-phospho-alpha-D-ribose 1-diphosphate: step 1/9. Its function is as follows. Required for the first step of histidine biosynthesis. May allow the feedback regulation of ATP phosphoribosyltransferase activity by histidine. The chain is ATP phosphoribosyltransferase regulatory subunit from Pseudomonas syringae pv. syringae (strain B728a).